A 520-amino-acid polypeptide reads, in one-letter code: MEFHNGGHVSGIGGFLVSLTSRMKPHTLAVTPALIFAITVATIGSFQFGYNTGVINAPETIIKEFINKTLTDKANAPPSEVLLTNLWSLSVAIFSVGGMIGSFSVGLFVNRFGRRNSMLIVNLLAATGGCLMGLCKIAESVEMLILGRLVIGLFCGLCTGFVPMYIGEISPTALRGAFGTLNQLGIVIGILVAQIFGLELILGSEELWPVLLGFTILPAILQSAALPCCPESPRFLLINRKKEENATRILQRLWGTQDVSQDIQEMKDESARMSQEKQVTVLELFRVSSYRQPIIISIVLQLSQQLSGINAVFYYSTGIFKDAGVQQPIYATISAGVVNTIFTLLSLFLVERAGRRTLHMIGLGGMAFCSTLMTVSLLLKNHYNGMSFVCIGAILVFVACFEIGPGPIPWFIVAELFSQGPRPAAMAVAGCSNWTSNFLVGLLFPSAAYYLGAYVFIIFTGFLITFLAFTFFKVPETRGRTFEDITRAFEGQAHGADRSGKDGVMGMNSIEPAKETTTNV.

Residues 1–29 (MEFHNGGHVSGIGGFLVSLTSRMKPHTLA) are Cytoplasmic-facing. Residues 30 to 50 (VTPALIFAITVATIGSFQFGY) form a helical membrane-spanning segment. The Extracellular segment spans residues 51–88 (NTGVINAPETIIKEFINKTLTDKANAPPSEVLLTNLWS). N67 carries an N-linked (GlcNAc...) asparagine glycan. The chain crosses the membrane as a helical span at residues 89 to 109 (LSVAIFSVGGMIGSFSVGLFV). Residues 110–117 (NRFGRRNS) lie on the Cytoplasmic side of the membrane. Residues 118–138 (MLIVNLLAATGGCLMGLCKIA) form a helical membrane-spanning segment. The Extracellular segment spans residues 139 to 148 (ESVEMLILGR). Residues 149–169 (LVIGLFCGLCTGFVPMYIGEI) form a helical membrane-spanning segment. At 170–177 (SPTALRGA) the chain is on the cytoplasmic side. A helical transmembrane segment spans residues 178–198 (FGTLNQLGIVIGILVAQIFGL). Q183 contacts D-glucose. Topologically, residues 199 to 207 (ELILGSEEL) are extracellular. A helical transmembrane segment spans residues 208–228 (WPVLLGFTILPAILQSAALPC). Topologically, residues 229-293 (CPESPRFLLI…LFRVSSYRQP (65 aa)) are cytoplasmic. A helical membrane pass occupies residues 294-314 (IIISIVLQLSQQLSGINAVFY). D-glucose-binding positions include 304 to 305 (QQ) and N310. The Extracellular segment spans residues 315–328 (YSTGIFKDAGVQQP). A helical membrane pass occupies residues 329-349 (IYATISAGVVNTIFTLLSLFL). N339 provides a ligand contact to D-glucose. At 350–358 (VERAGRRTL) the chain is on the cytoplasmic side. A helical membrane pass occupies residues 359-379 (HMIGLGGMAFCSTLMTVSLLL). Residues 380-392 (KNHYNGMSFVCIG) lie on the Extracellular side of the membrane. The helical transmembrane segment at 393 to 413 (AILVFVACFEIGPGPIPWFIV) threads the bilayer. Residues E402 and W410 each coordinate D-glucose. The Cytoplasmic segment spans residues 414-423 (AELFSQGPRP). Residues 424–444 (AAMAVAGCSNWTSNFLVGLLF) form a helical membrane-spanning segment. Over 445–451 (PSAAYYL) the chain is Extracellular. Residues 452–472 (GAYVFIIFTGFLITFLAFTFF) traverse the membrane as a helical segment. Over 473-520 (KVPETRGRTFEDITRAFEGQAHGADRSGKDGVMGMNSIEPAKETTTNV) the chain is Cytoplasmic. Positions 493–520 (AHGADRSGKDGVMGMNSIEPAKETTTNV) are disordered.

This sequence belongs to the major facilitator superfamily. Sugar transporter (TC 2.A.1.1) family. Glucose transporter subfamily. Mainly expressed in testis. Also expressed in small intestine, liver and kidney.

It localises to the cell membrane. The catalysed reaction is D-glucose(out) = D-glucose(in). The enzyme catalyses L-dehydroascorbate(out) = L-dehydroascorbate(in). In terms of biological role, hexose transporter that can mediate the transport of glucose and dehydroascorbate across the cell membrane. This is Solute carrier family 2, facilitated glucose transporter member 14 from Homo sapiens (Human).